A 90-amino-acid chain; its full sequence is Small ribosomal subunit protein bS16 (90 aa).

Belongs to the bacterial ribosomal protein bS16 family.

This Geobacillus sp. (strain WCH70) protein is Small ribosomal subunit protein bS16.